The primary structure comprises 339 residues: Serine racemase (339 aa).

Residues serine 43 and lysine 63 each coordinate ATP. Lysine 68 functions as the Proton acceptor in the catalytic mechanism. Lysine 68 is modified (N6-(pyridoxal phosphate)lysine). Threonine 90 serves as a coordination point for Ca(2+). Serine 93 acts as the Proton acceptor in catalysis. A pyridoxal 5'-phosphate-binding site is contributed by asparagine 95. The residue at position 122 (cysteine 122) is an S-nitrosocysteine. ATP is bound at residue tyrosine 130. Residue aspartate 187 participates in Mg(2+) binding. The pyridoxal 5'-phosphate site is built by glycine 195, glycine 196, and glycine 197. Glutamate 219, alanine 223, and aspartate 225 together coordinate Ca(2+). Residues glutamate 219, alanine 223, and aspartate 225 each coordinate Mg(2+). 3 residues coordinate Mn(2+): glutamate 219, alanine 223, and aspartate 225. Residue lysine 287 participates in ATP binding. Serine 323 serves as a coordination point for pyridoxal 5'-phosphate. Residue asparagine 326 coordinates ATP.

Belongs to the serine/threonine dehydratase family. Mg(2+) is required as a cofactor. Mn(2+) serves as cofactor. Requires Ca(2+) as cofactor. It depends on pyridoxal 5'-phosphate as a cofactor.

The catalysed reaction is L-serine = D-serine. It carries out the reaction L-serine = pyruvate + NH4(+). The enzyme catalyses D-serine = pyruvate + NH4(+). Catalyzes the synthesis of D-serine from L-serine. Has dehydratase activity towards both L-serine and D-serine. This Oryza sativa subsp. indica (Rice) protein is Serine racemase.